Here is a 60-residue protein sequence, read N- to C-terminus: MAVPKFKPSKSRSRTRRSINMRKKIPQFQECSNCGNLAIRHRICAKCGYYRNSQYLELGL.

This sequence belongs to the bacterial ribosomal protein bL32 family.

This Borrelia duttonii (strain Ly) protein is Large ribosomal subunit protein bL32.